The chain runs to 491 residues: Zinc finger protein 655 (491 aa).

The disordered stretch occupies residues 1-52; that stretch reads MEEIPAQEAAGSPRVQFQSLETQSECLSPEPQFVQDTDMEQGLTGDGETREE. The span at 15 to 26 shows a compositional bias: polar residues; that stretch reads VQFQSLETQSEC. Gln-60 carries the phosphoserine modification. Glycyl lysine isopeptide (Lys-Gly) (interchain with G-Cter in SUMO2) cross-links involve residues Lys-77, Lys-190, and Lys-201. 6 consecutive C2H2-type zinc fingers follow at residues 212 to 234, 240 to 262, 303 to 325, 330 to 353, 380 to 402, and 408 to 430; these read YKCDVCGKIFHQSSALTRHQRIH, YKCKECEKSFSQSSSLSRHKRIH, YKCSSCERVFSRSVHLTQHQKIH, CKCTVCGSDFCHTSYLLEHQRVHH, YTCSECGKDFRLNSHLIQHQRIH, and HECNECGKAFSQTSCLIQHHKMH.

It belongs to the krueppel C2H2-type zinc-finger protein family. Interacts with VAV1 and CDK4. Interacts with INTS13; promoting association with the integrator complex.

Its subcellular location is the nucleus. Its function is as follows. Probable transcription factor. The chain is Zinc finger protein 655 from Homo sapiens (Human).